The sequence spans 66 residues: Large ribosomal subunit protein bL35 (66 aa).

Residues 1–46 (MPKMKTHRASAKRFKRTANGGLKRHHAFTGHRFHGKTKKQRRHLRK) show a composition bias toward basic residues. Residues 1–52 (MPKMKTHRASAKRFKRTANGGLKRHHAFTGHRFHGKTKKQRRHLRKPAMVSR) form a disordered region.

It belongs to the bacterial ribosomal protein bL35 family.

In Lactobacillus acidophilus (strain ATCC 700396 / NCK56 / N2 / NCFM), this protein is Large ribosomal subunit protein bL35.